A 357-amino-acid chain; its full sequence is Decorin (357 aa).

A signal peptide spans 1–16 (MRLVLLFVLLLPVCLA). A propeptide spanning residues 17–30 (TRFHQKGLFDFMIE) is cleaved from the precursor. Ser46 is a glycosylation site (O-linked (Xyl...) (glycosaminoglycan) serine). Cystine bridges form between Cys52–Cys58 and Cys56–Cys65. LRR repeat units lie at residues 71-91 (ERVPKDLPPDTTLLDLQNNKI), 92-115 (TEIKEGDFKNLKNLHALILVNNKI), 116-139 (SKISPAAFAPLKKLERLYLSKNNL), 140-160 (KELPENMPKSLQEIRAHENEI), 161-184 (SKLRKAVFNGLNQVIVLELGTNPL), 185-210 (KSSGIENGAFQGMKRLSYIRIADTNI), 211-231 (TSIPKGLPPSLTELHLDGNKI), 232-255 (SKIDAEGLSGLTNLAKLGLSFNSI), 256-279 (SSVENGSLNNVPHLRELHLNNNEL), 280-302 (VRVPSGLGEHKYIQVVYLHNNKI), 303-332 (ASIGINDFCPLGYNTKKATYSGVSLFSNPV), and 333-357 (QYWEIQPSAFRCIHERSAVQIGNYK). Asn209 carries an N-linked (GlcNAc...) asparagine glycan. N-linked (GlcNAc...) asparagine glycosylation occurs at Asn260. A disulfide bridge connects residues Cys311 and Cys344.

This sequence belongs to the small leucine-rich proteoglycan (SLRP) family. SLRP class I subfamily. As to quaternary structure, binds to type I and type II collagen, to fibronectin and TGF-beta. Forms a ternary complex with MFAP2 and ELN. The attached glycosaminoglycan chain can be either chondroitin sulfate or dermatan sulfate depending upon the tissue of origin.

It localises to the secreted. The protein resides in the extracellular space. Its subcellular location is the extracellular matrix. Functionally, may affect the rate of fibrils formation. This is Decorin (DCN) from Gallus gallus (Chicken).